The primary structure comprises 223 residues: ATP phosphoribosyltransferase (223 aa).

The protein belongs to the ATP phosphoribosyltransferase family. Short subfamily. Heteromultimer composed of HisG and HisZ subunits.

It is found in the cytoplasm. The catalysed reaction is 1-(5-phospho-beta-D-ribosyl)-ATP + diphosphate = 5-phospho-alpha-D-ribose 1-diphosphate + ATP. The protein operates within amino-acid biosynthesis; L-histidine biosynthesis; L-histidine from 5-phospho-alpha-D-ribose 1-diphosphate: step 1/9. In terms of biological role, catalyzes the condensation of ATP and 5-phosphoribose 1-diphosphate to form N'-(5'-phosphoribosyl)-ATP (PR-ATP). Has a crucial role in the pathway because the rate of histidine biosynthesis seems to be controlled primarily by regulation of HisG enzymatic activity. In Novosphingobium aromaticivorans (strain ATCC 700278 / DSM 12444 / CCUG 56034 / CIP 105152 / NBRC 16084 / F199), this protein is ATP phosphoribosyltransferase.